We begin with the raw amino-acid sequence, 614 residues long: Glucose oxidase 1 (614 aa).

Residues M1 to A15 form the signal peptide. Residues L52, T53, and E73 each coordinate FAD. The N-linked (GlcNAc...) asparagine glycan is linked to N112. The disordered stretch occupies residues I117–R136. 4 residues coordinate FAD: S126, N130, G131, and S133. N-linked (GlcNAc...) asparagine glycosylation is found at N184 and N191. C187 and C229 are disulfide-bonded. Position 273 (V273) interacts with FAD. N279, N383, and N416 each carry an N-linked (GlcNAc...) asparagine glycan. H544 serves as the catalytic Proton acceptor. 2 residues coordinate O2: R565 and V566. G577 and M589 together coordinate FAD.

It belongs to the GMC oxidoreductase family. As to quaternary structure, homodimer. It depends on FAD as a cofactor.

The protein localises to the secreted. It localises to the cell wall. Its subcellular location is the cytoplasm. The protein resides in the extracellular space. It is found in the extracellular matrix. It carries out the reaction beta-D-glucose + O2 = D-glucono-1,5-lactone + H2O2. In terms of biological role, glucose oxidase catalyzes the oxidation of beta-D-glucose to D-glucono-delta-lactone and hydrogen peroxide in the presence of molecular oxygen. The polypeptide is Glucose oxidase 1 (Penicillium expansum (Blue mold rot fungus)).